We begin with the raw amino-acid sequence, 246 residues long: 14-3-3 protein eta (246 aa).

Gly-2 carries the N-acetylglycine modification. Phosphoserine is present on residues Ser-25 and Ser-59.

The protein belongs to the 14-3-3 family. Homodimer. Interacts with many nuclear hormone receptors and cofactors including AR, ESR1, ESR2, MC2R, NR3C1, NRIP1, PPARBP and THRA. Interacts with ABL1 (phosphorylated form); the interaction retains it in the cytoplasm. Interacts with ARHGEF28 and CDK16. Weakly interacts with CDKN1B. Interacts with GAB2. Interacts with KCNK18 in a phosphorylation-dependent manner. Interacts with SAMSN1. Interacts with the 'Ser-241' phosphorylated form of PDPK1. Interacts with the 'Thr-369' phosphorylated form of DAPK2. Interacts with PI4KB, TBC1D22A and TBC1D22B. Interacts with SLITRK1. Interacts with MEFV. Phosphorylated on Ser-59 by protein kinase C delta type catalytic subunit in a sphingosine-dependent fashion. As to expression, expressed mainly in the brain and present in other tissues albeit at lower levels.

Adapter protein implicated in the regulation of a large spectrum of both general and specialized signaling pathways. Binds to a large number of partners, usually by recognition of a phosphoserine or phosphothreonine motif. Binding generally results in the modulation of the activity of the binding partner. Negatively regulates the kinase activity of PDPK1. In Homo sapiens (Human), this protein is 14-3-3 protein eta (YWHAH).